The following is a 471-amino-acid chain: MPN domain-containing protein (471 aa).

Residues 1–10 (MAAPEPLSPA) show a composition bias toward low complexity. A disordered region spans residues 1–63 (MAAPEPLSPA…GGGGAGAGGC (63 aa)). An N-acetylalanine modification is found at A2. Phosphoserine is present on S8. Residues 16–29 (EAPEEDEDEAEAED) show a composition bias toward acidic residues. The span at 36–63 (GAGGGRSGGGGSSVSGGGGGGGAGAGGC) shows a compositional bias: gly residues. Residues 71–166 (TRRAVTLRVL…KYKATWLRLH (96 aa)) enclose the RAMA domain. 3 residues coordinate DNA: S123, S125, and W145. The segment at 170–229 (TPATAADESPASEGEEEELLMEEEEEDVLAGVSAEDKSRRPLGKSPSEPAHPEATTPGKR) is disordered. 2 positions are modified to phosphoserine: S178 and S181. Residues 182–197 (EGEEEELLMEEEEEDV) show a composition bias toward acidic residues. Residues 272–407 (VAVSSNVLFL…PESKISPFWV (136 aa)) form the MPN domain. Positions 349, 351, and 362 each coordinate Zn(2+). The short motif at 349–362 (HSHPHSPALPSLQD) is the JAMM motif element.

It belongs to the peptidase M67 family. Monomer. Mainly monomoric, but when binds to dsDNA, forms homotetramer assembled into two homodimers. May interact with histones; this interaction is facilitated by dsDNA binding. Post-translationally, degraded following binding to N(6)-methyladenosine methylated DNA (m6A).

Functionally, probable protease. Acts as a sensor of N(6)-methyladenosine methylation on DNA (m6A): recognizes and binds m6A DNA, leading to its degradation. Binds only double strand DNA (dsDNA) in a sequence-independent manner. The protein is MPN domain-containing protein of Homo sapiens (Human).